The primary structure comprises 143 residues: Polyadenylate-binding protein-interacting protein 2 (143 aa).

The PAM2-like motif lies at 11–21; it reads TLNPNAPVFDP.

This chain is Polyadenylate-binding protein-interacting protein 2 (CID2), found in Arabidopsis thaliana (Mouse-ear cress).